A 384-amino-acid chain; its full sequence is Cytochrome b (384 aa).

A run of 4 helical transmembrane segments spans residues 32 to 52 (LGSLLGLCLVIQITTGIFLAM), 76 to 98 (WLIRYMHTNGASFFFICMYIHIG), 113 to 133 (VWTVGVIIFILTMAAAFLGYC), and 179 to 199 (FFTFHYLVPFIIAAMVIMHLM). His-82 and His-96 together coordinate heme b. His-183 and His-197 together coordinate heme b. Position 202 (His-202) interacts with a ubiquinone. 4 helical membrane passes run 225 to 245 (FIFKDLVTVFVFMIFFSLFVF), 289 to 309 (LGGVITMFGTILVLLMLPITD), 321 to 341 (LSKFFFFLFITNFILLGKLGE), and 348 to 368 (FILMGQICTFIYFAYFLILVP).

It belongs to the cytochrome b family. Fungal cytochrome b-c1 complex contains 10 subunits; 3 respiratory subunits, 2 core proteins and 5 low-molecular weight proteins. Cytochrome b-c1 complex is a homodimer. The cofactor is heme b.

It localises to the mitochondrion inner membrane. Its function is as follows. Component of the ubiquinol-cytochrome c reductase complex (complex III or cytochrome b-c1 complex) that is part of the mitochondrial respiratory chain. The b-c1 complex mediates electron transfer from ubiquinol to cytochrome c. Contributes to the generation of a proton gradient across the mitochondrial membrane that is then used for ATP synthesis. The protein is Cytochrome b (COB) of Eremothecium gossypii (strain ATCC 10895 / CBS 109.51 / FGSC 9923 / NRRL Y-1056) (Yeast).